Consider the following 543-residue polypeptide: Chaperonin GroEL 2 (543 aa).

Residues 29-32, 86-90, Gly-413, 479-481, and Asp-495 each bind ATP; these read TLGP, DGTTT, and NAA.

The protein belongs to the chaperonin (HSP60) family. As to quaternary structure, forms a cylinder of 14 subunits composed of two heptameric rings stacked back-to-back. Interacts with the co-chaperonin GroES.

The protein localises to the cytoplasm. It catalyses the reaction ATP + H2O + a folded polypeptide = ADP + phosphate + an unfolded polypeptide.. In terms of biological role, together with its co-chaperonin GroES, plays an essential role in assisting protein folding. The GroEL-GroES system forms a nano-cage that allows encapsulation of the non-native substrate proteins and provides a physical environment optimized to promote and accelerate protein folding. This Prochlorococcus marinus (strain NATL1A) protein is Chaperonin GroEL 2.